Here is a 535-residue protein sequence, read N- to C-terminus: T-complex protein 1 subunit epsilon (535 aa).

This sequence belongs to the TCP-1 chaperonin family. Heterooligomeric complex of about 850 to 900 kDa that forms two stacked rings, 12 to 16 nm in diameter.

It localises to the cytoplasm. Functionally, molecular chaperone; assists the folding of proteins upon ATP hydrolysis. Known to play a role, in vitro, in the folding of actin and tubulin. The sequence is that of T-complex protein 1 subunit epsilon from Arabidopsis thaliana (Mouse-ear cress).